Consider the following 101-residue polypeptide: Urease subunit gamma (101 aa).

It belongs to the urease gamma subunit family. In terms of assembly, heterotrimer of UreA (gamma), UreB (beta) and UreC (alpha) subunits. Three heterotrimers associate to form the active enzyme.

The protein resides in the cytoplasm. The catalysed reaction is urea + 2 H2O + H(+) = hydrogencarbonate + 2 NH4(+). It participates in nitrogen metabolism; urea degradation; CO(2) and NH(3) from urea (urease route): step 1/1. This Corynebacterium kroppenstedtii (strain DSM 44385 / JCM 11950 / CIP 105744 / CCUG 35717) protein is Urease subunit gamma.